The chain runs to 217 residues: Oxygen regulatory protein NreC (217 aa).

The Response regulatory domain occupies Lys2–Tyr119. Asp53 carries the post-translational modification 4-aspartylphosphate. In terms of domain architecture, HTH luxR-type spans Thr148–Lys213. Positions Asn172–Thr191 form a DNA-binding region, H-T-H motif.

Phosphorylated by NreB.

It localises to the cytoplasm. Its function is as follows. Member of the two-component regulatory system NreB/NreC involved in the control of dissimilatory nitrate/nitrite reduction in response to oxygen. Phosphorylated NreC binds to a GC-rich palindromic sequence at the promoters of the nitrate (narGHJI) and nitrite (nir) reductase operons, as well as the putative nitrate transporter gene narT, and activates their expression. This is Oxygen regulatory protein NreC (nreC) from Staphylococcus aureus (strain bovine RF122 / ET3-1).